The following is a 426-amino-acid chain: Putative F-box protein At4g38870 (426 aa).

The region spanning 47-92 (SVNSELLPVDLIMEILKKLSLKPLIRFLCVSKLWASIIRDPYFMKL) is the F-box domain.

This chain is Putative F-box protein At4g38870, found in Arabidopsis thaliana (Mouse-ear cress).